We begin with the raw amino-acid sequence, 535 residues long: CTP synthase (535 aa).

Residues 1–266 are amidoligase domain; it reads MKFVVITGGV…GDYICERLGL (266 aa). Ser12 serves as a coordination point for CTP. UTP is bound at residue Ser12. ATP is bound by residues 13 to 18 and Asp70; that span reads GIGKGI. Residues Asp70 and Glu140 each coordinate Mg(2+). CTP contacts are provided by residues 147-149, 187-192, and Lys223; these read DIE and KTKPTQ. UTP contacts are provided by residues 187 to 192 and Lys223; that span reads KTKPTQ. Residues 291-535 enclose the Glutamine amidotransferase type-1 domain; the sequence is RIAVVGKYVD…IKAAAGQGPD (245 aa). Gly355 serves as a coordination point for L-glutamine. The Nucleophile; for glutamine hydrolysis role is filled by Cys382. L-glutamine-binding positions include 383–386, Glu406, and Arg464; that span reads LGFQ. Active-site residues include His508 and Glu510.

Belongs to the CTP synthase family. In terms of assembly, homotetramer.

It carries out the reaction UTP + L-glutamine + ATP + H2O = CTP + L-glutamate + ADP + phosphate + 2 H(+). The catalysed reaction is L-glutamine + H2O = L-glutamate + NH4(+). It catalyses the reaction UTP + NH4(+) + ATP = CTP + ADP + phosphate + 2 H(+). The protein operates within pyrimidine metabolism; CTP biosynthesis via de novo pathway; CTP from UDP: step 2/2. Allosterically activated by GTP, when glutamine is the substrate; GTP has no effect on the reaction when ammonia is the substrate. The allosteric effector GTP functions by stabilizing the protein conformation that binds the tetrahedral intermediate(s) formed during glutamine hydrolysis. Inhibited by the product CTP, via allosteric rather than competitive inhibition. Catalyzes the ATP-dependent amination of UTP to CTP with either L-glutamine or ammonia as the source of nitrogen. Regulates intracellular CTP levels through interactions with the four ribonucleotide triphosphates. This Methanopyrus kandleri (strain AV19 / DSM 6324 / JCM 9639 / NBRC 100938) protein is CTP synthase.